The following is a 235-amino-acid chain: MPKHSKRYNEIRKLVDSEKAYTLDEAVELLKKTATAKFDETVEFHIKTNIDYRKSEQNIRSTISLPHGTGKSVRVLVFAKGEKAEEAKQAGADYVGAEELADKIANEGFVDFDVAIATPDMMKVIGKLGKVLGPRGLMPNPKTGTVTEDIAAAVSEFKKGKVEVRTDKTGNLHFPVGKASFEPDKLKENIKSAYEQILSLRPAGVKGHFIKKAVVATTMGPGIKLDLNVLAEGKR.

This sequence belongs to the universal ribosomal protein uL1 family. As to quaternary structure, part of the 50S ribosomal subunit.

Its function is as follows. Binds directly to 23S rRNA. The L1 stalk is quite mobile in the ribosome, and is involved in E site tRNA release. Functionally, protein L1 is also a translational repressor protein, it controls the translation of the L11 operon by binding to its mRNA. The polypeptide is Large ribosomal subunit protein uL1 (Fervidobacterium nodosum (strain ATCC 35602 / DSM 5306 / Rt17-B1)).